Consider the following 165-residue polypeptide: UPF0179 protein Igni_1272 (165 aa).

The protein belongs to the UPF0179 family.

This Ignicoccus hospitalis (strain KIN4/I / DSM 18386 / JCM 14125) protein is UPF0179 protein Igni_1272.